The following is a 94-amino-acid chain: Co-chaperonin GroES (94 aa).

It belongs to the GroES chaperonin family. As to quaternary structure, heptamer of 7 subunits arranged in a ring. Interacts with the chaperonin GroEL.

The protein resides in the cytoplasm. Its function is as follows. Together with the chaperonin GroEL, plays an essential role in assisting protein folding. The GroEL-GroES system forms a nano-cage that allows encapsulation of the non-native substrate proteins and provides a physical environment optimized to promote and accelerate protein folding. GroES binds to the apical surface of the GroEL ring, thereby capping the opening of the GroEL channel. The sequence is that of Co-chaperonin GroES from Clostridium botulinum.